The chain runs to 1756 residues: Multifunctional conjugation protein TraI (1756 aa).

The interval 1-330 (MLSFSVVKSA…TQAIAGLSER (330 aa)) is DNA relaxase. Tyrosine 16 acts as the O-(5'-phospho-DNA)-tyrosine intermediate; for relaxase activity in catalysis. Tyrosine 17 (relaxase) is an active-site residue. Mg(2+)-binding residues include histidine 146, histidine 157, and histidine 159. The interval 950–1500 (GKEAVTPLME…LRDVAAGRAV (551 aa)) is DNA helicase I. An ATP-binding site is contributed by 992–999 (GYAGVGKT). Residues 1719-1753 (EQEAVREVARENLLQERLQQIERDMVRDLQKEKTL) adopt a coiled-coil conformation.

To TraI of plasmid F. Monomer. Part of the relaxosome, a complex composed of plasmid-encodes TraI, TraM, TraY and host-encoded IHF bound to the F plasmid origin of transfer (oriT). Directly contacts coupling protein TraD. Seems to directly contact TraM via its C-terminus. It depends on Mg(2+) as a cofactor.

The protein localises to the cytoplasm. The catalysed reaction is ATP-independent breakage of single-stranded DNA, followed by passage and rejoining.. It carries out the reaction ATP + H2O = ADP + phosphate + H(+). Its function is as follows. Conjugative DNA transfer (CDT) is the unidirectional transfer of ssDNA plasmid from a donor to a recipient cell. It is the central mechanism by which antibiotic resistance and virulence factors are propagated in bacterial populations. Part of the relaxosome, which facilitates a site- and strand-specific cut in the origin of transfer by TraI, at the nic site. Relaxosome formation requires binding of IHF and TraY to the oriT region, which then facilitates binding of TraI relaxase. TraI forms a covalent 5'-phosphotyrosine intermediate linkage to the ssDNA. The transesterified T-strand moves from the donor cell to the recipient cell in a 5'to 3' direction, with the DNA helicase activity of TraI unwinding the DNA. DNA transfer occurs via the conjugative pore (transferosome) an intercellular junction mediated by a type IV secretion system, with TraD providing the means to link the relaxosome to the conjugative pore. The relaxase completes DNA transfer by reversing the covalent phosphotyrosine linkage and releasing the T-strand. TraI has also been identified as DNA helicase I. DNA. helicase I is a potent, highly processive DNA-dependent ATPase, able to unwind about 1.1 kb dsDNA per second in a 5' to 3' manner. The polypeptide is Multifunctional conjugation protein TraI (traI) (Escherichia coli).